The chain runs to 576 residues: MDGKDKATGKCPVMHGAMTAAGVSNTSWWPNALNLDILHQHDTKGNPLNGFDYRAAVKGLDVGLRADLHALMTDSQPWWPADWGHYGGLMIRMAWHAAGSYRAADGRGGGNTGKPARFAPLNSWPDNVSLDKARRLLWPIKKKYGNAVSWADLILFAGTVAYESMGLKTFGFGFGREDIWAPEKDVYWGAEKDWLAPSDGRYGDLAKPETMENPLAAVQMGLIYVNPEGVNGQPDPARTALHIRETFARMGMNDEETVALTAGGHTVGKAHGNGDAKALGPDPEAADVTVRALAGRTRIWAARRRRPSPRGSRAPGPRIRRAGTWAISRCSSGHDWELTKSPAGAWQWKPVTIAEEAKPLDATDLTTRHDPLMTDADMAMKVDPSTMRSVRSSWPIRPPSTTLSRAPGSSCCIATWGRRRATSAPMCPPRIWSAGPGAAGPTGWDVAKVKAQIAASGLSVADLVATAWDSARTFRQSDYRGGANGARIRLAPQKDWAGNEPERLAGACGARTDRGGAGASVADVIVLAGNLGVEQAAAGVSRWRCPSPPVAAMRAAMTDGPSLTCWSRCMTASATG.

The tryptophyl-tyrosyl-methioninium (Trp-Tyr) (with M-250) cross-link spans 95–224 (WHAAGSYRAA…LAAVQMGLIY (130 aa)). Residue His-96 is the Proton acceptor of the active site. The tryptophyl-tyrosyl-methioninium (Tyr-Met) (with W-95) cross-link spans 224 to 250 (YVNPEGVNGQPDPARTALHIRETFARM). His-265 serves as a coordination point for heme b.

It belongs to the peroxidase family. Peroxidase/catalase subfamily. As to quaternary structure, homotetramer. Heme b serves as cofactor. Post-translationally, formation of the three residue Trp-Tyr-Met cross-link is important for the catalase, but not the peroxidase activity of the enzyme.

The catalysed reaction is H2O2 + AH2 = A + 2 H2O. The enzyme catalyses 2 H2O2 = O2 + 2 H2O. Functionally, bifunctional enzyme with both catalase and broad-spectrum peroxidase activity. Also displays NADH oxidase, INH lyase and isonicotinoyl-NAD synthase activities. Important for stationary phase survival. The chain is Catalase-peroxidase (katG) from Rhodobacter capsulatus (Rhodopseudomonas capsulata).